A 122-amino-acid polypeptide reads, in one-letter code: UPF0102 protein NGR_c36770 (122 aa).

Belongs to the UPF0102 family.

This chain is UPF0102 protein NGR_c36770, found in Sinorhizobium fredii (strain NBRC 101917 / NGR234).